The chain runs to 501 residues: Envelope glycoprotein C homolog (501 aa).

An N-terminal signal peptide occupies residues 1–27 (MLTPRVLRALGWTGLFFLLLSPSNVLG). At 28–465 (ASLSRDLETP…DATPAARGTP (438 aa)) the chain is on the virion surface side. Residue asparagine 46 is glycosylated (N-linked (GlcNAc...) asparagine; by host). The tract at residues 53 to 86 (PLTEVPHAPSTESVSTNSESTNEHTITETTGKNA) is disordered. Residues 62–72 (STESVSTNSES) show a composition bias toward low complexity. 7 N-linked (GlcNAc...) asparagine; by host glycosylation sites follow: asparagine 91, asparagine 100, asparagine 120, asparagine 212, asparagine 354, asparagine 400, and asparagine 429. Positions 258–356 (PASVDVLAPP…GDMISTTNAT (99 aa)) constitute an Ig-like domain. Residues 466–492 (MVITVTAVLGLAVILGMGIIMTALCLY) form a helical membrane-spanning segment. Over 493 to 501 (NSTRKNIRL) the chain is Cytoplasmic.

Belongs to the herpesviridae glycoprotein C family.

It localises to the secreted. The protein resides in the host cell membrane. In terms of biological role, may play an immunoevasive role in the pathogenesis of Marek's disease. It is a candidate for causing the early-stage immunosuppression that occurs after MDHV infection. This Gallus gallus (Chicken) protein is Envelope glycoprotein C homolog (gC).